An 852-amino-acid chain; its full sequence is MTLATRSLIKNLSSALGAQAEREQLIALISIATQTVAPLWPLDSAIAVNPLSGFEEQPFEEVLPEAAALFGARPTLSLNEWRTLMDEGRIDQVSLRKAVVNALGGPDEAFALLGPDLNAYNLLVARLLDMEAEDVPPVRRALSPGMATLARWLAAFFDRNAALRLPGRERGLYACLSEALRHDPALLRASNATGRAWLENAPADPVDMLILAARRDAVGPERRLPWLRAMVASLPGWAAHLRWRSEHAGPATSLGAPACMADLMALVALVQGVVQPAPRAVPDPDCPEDVEAALLVHCGVAQDAPAKWPEAGRARLRAVAALTHAQLGLIFQEAAESSFLGQLAPQLEGASARLAAPQSTLRPEAQAIFCIDVRSEPMRRALETQGRFETLGYAGFFGLPIAINPACAAPARNQLPVLLSPSHVVPERAMPGREAEATAMLARHAALGDAQAMLDTTKSGAIGFAAAEAAGPVAAVAMLARTLAPRLTHRLRQRLIGERGHVLAPAACNDQDHERHDGQGEGIPLAQRVAYARGMFALTGLSPQTARLVALVGHGGCTTNNAFAASLDCGACGGHPGGPNARLMAAILNDPAVRKGLAAKGVDLPHDTWFIAAQHDTTRDEVEIFDRHLVPASHVADLARFERALSCAGAQSRDERAARLDRTADDLLTGAAHWGEVRPEWGLSGNAAFIVGPRALTREVDLGGNAFLHSYDWKKDDDGSALTGIMTAPMIVAQWINCQYLFSTIDNEIFGAGDKTTQNVVGGFGVVQGSGGDLCTGLPRQSLFRDDGTPYHTPRRLAVIVHAPLQRVQDIVLRHDAVGRLVENGWVNLVVIDPWKHKAHHWVRGDWAVRPC.

4 residues coordinate Zn(2+): cysteine 370, aspartate 372, histidine 554, and cysteine 569.

The protein belongs to the inorganic carbon transporter (TC 9.A.2) DabA family. In terms of assembly, forms a complex with DabB. It depends on Zn(2+) as a cofactor.

Its subcellular location is the cell inner membrane. Part of an energy-coupled inorganic carbon pump. The polypeptide is Probable inorganic carbon transporter subunit DabA (Novosphingobium aromaticivorans (strain ATCC 700278 / DSM 12444 / CCUG 56034 / CIP 105152 / NBRC 16084 / F199)).